The chain runs to 651 residues: UvrABC system protein B (651 aa).

Residues 25 to 411 (RGISCGAKEQ…TGGVATEQLI (387 aa)) enclose the Helicase ATP-binding domain. 38 to 45 (GVTGSGKT) lines the ATP pocket. The Beta-hairpin motif lies at 91-114 (YYDYYQPEAYIPQSDVYIEKDALI). Residues 427-591 (DGQIHDVMCE…IVPRTIQKPV (165 aa)) form the Helicase C-terminal domain. Residues 593 to 615 (TSLSERVGSSRKKVSRDTNTDPA) are disordered. A UVR domain is found at 616 to 651 (NRDIVELQKEMLLCAENLDFERAVEIRNEIKRLTAP).

Belongs to the UvrB family. Forms a heterotetramer with UvrA during the search for lesions. Interacts with UvrC in an incision complex.

Its subcellular location is the cytoplasm. In terms of biological role, the UvrABC repair system catalyzes the recognition and processing of DNA lesions. A damage recognition complex composed of 2 UvrA and 2 UvrB subunits scans DNA for abnormalities. Upon binding of the UvrA(2)B(2) complex to a putative damaged site, the DNA wraps around one UvrB monomer. DNA wrap is dependent on ATP binding by UvrB and probably causes local melting of the DNA helix, facilitating insertion of UvrB beta-hairpin between the DNA strands. Then UvrB probes one DNA strand for the presence of a lesion. If a lesion is found the UvrA subunits dissociate and the UvrB-DNA preincision complex is formed. This complex is subsequently bound by UvrC and the second UvrB is released. If no lesion is found, the DNA wraps around the other UvrB subunit that will check the other stand for damage. This Anaplasma marginale (strain St. Maries) protein is UvrABC system protein B.